The following is a 169-amino-acid chain: Transcription antitermination protein NusB (169 aa).

It belongs to the NusB family.

Involved in transcription antitermination. Required for transcription of ribosomal RNA (rRNA) genes. Binds specifically to the boxA antiterminator sequence of the ribosomal RNA (rrn) operons. The polypeptide is Transcription antitermination protein NusB (Deinococcus geothermalis (strain DSM 11300 / CIP 105573 / AG-3a)).